A 515-amino-acid chain; its full sequence is ATP synthase subunit alpha (515 aa).

171-178 (GDRQTGKT) serves as a coordination point for ATP.

Belongs to the ATPase alpha/beta chains family. As to quaternary structure, F-type ATPases have 2 components, CF(1) - the catalytic core - and CF(0) - the membrane proton channel. CF(1) has five subunits: alpha(3), beta(3), gamma(1), delta(1), epsilon(1). CF(0) has three main subunits: a(1), b(2) and c(9-12). The alpha and beta chains form an alternating ring which encloses part of the gamma chain. CF(1) is attached to CF(0) by a central stalk formed by the gamma and epsilon chains, while a peripheral stalk is formed by the delta and b chains.

It is found in the cell inner membrane. It catalyses the reaction ATP + H2O + 4 H(+)(in) = ADP + phosphate + 5 H(+)(out). In terms of biological role, produces ATP from ADP in the presence of a proton gradient across the membrane. The alpha chain is a regulatory subunit. This Xanthomonas campestris pv. campestris (strain 8004) protein is ATP synthase subunit alpha.